A 484-amino-acid chain; its full sequence is Acetyl-coenzyme A carboxylase carboxyl transferase subunit beta, chloroplastic (484 aa).

The CoA carboxyltransferase N-terminal domain maps to 223–484 (LWIQCDNCYG…LHAFFPLNKN (262 aa)). The Zn(2+) site is built by C227, C230, C243, and C246. A C4-type zinc finger spans residues 227–246 (CDNCYGLMYKKVKINVCEQC).

Belongs to the AccD/PCCB family. In terms of assembly, acetyl-CoA carboxylase is a heterohexamer composed of biotin carboxyl carrier protein, biotin carboxylase and 2 subunits each of ACCase subunit alpha and ACCase plastid-coded subunit beta (accD). Requires Zn(2+) as cofactor.

It localises to the plastid. The protein localises to the chloroplast stroma. The enzyme catalyses N(6)-carboxybiotinyl-L-lysyl-[protein] + acetyl-CoA = N(6)-biotinyl-L-lysyl-[protein] + malonyl-CoA. It participates in lipid metabolism; malonyl-CoA biosynthesis; malonyl-CoA from acetyl-CoA: step 1/1. Component of the acetyl coenzyme A carboxylase (ACC) complex. Biotin carboxylase (BC) catalyzes the carboxylation of biotin on its carrier protein (BCCP) and then the CO(2) group is transferred by the transcarboxylase to acetyl-CoA to form malonyl-CoA. This is Acetyl-coenzyme A carboxylase carboxyl transferase subunit beta, chloroplastic from Capsella bursa-pastoris (Shepherd's purse).